The chain runs to 425 residues: Succinyl-diaminopimelate desuccinylase (425 aa).

Residue His96 coordinates Zn(2+). Asp98 is a catalytic residue. Asp129 is a binding site for Zn(2+). The Proton acceptor role is filled by Glu163. Zn(2+) is bound by residues Glu164, Glu192, and His378.

Belongs to the peptidase M20A family. DapE subfamily. In terms of assembly, homodimer. The cofactor is Zn(2+). Co(2+) serves as cofactor.

It carries out the reaction N-succinyl-(2S,6S)-2,6-diaminopimelate + H2O = (2S,6S)-2,6-diaminopimelate + succinate. It functions in the pathway amino-acid biosynthesis; L-lysine biosynthesis via DAP pathway; LL-2,6-diaminopimelate from (S)-tetrahydrodipicolinate (succinylase route): step 3/3. Functionally, catalyzes the hydrolysis of N-succinyl-L,L-diaminopimelic acid (SDAP), forming succinate and LL-2,6-diaminopimelate (DAP), an intermediate involved in the bacterial biosynthesis of lysine and meso-diaminopimelic acid, an essential component of bacterial cell walls. The chain is Succinyl-diaminopimelate desuccinylase from Polaromonas sp. (strain JS666 / ATCC BAA-500).